Consider the following 99-residue polypeptide: Protein Frey (99 aa).

Residues 13 to 29 (AGLSLFALYLVLAAALL) traverse the membrane as a helical segment. A disordered region spans residues 64-90 (RPKHPWPRGPRPLLSRAQQRKRDGPDM).

As to quaternary structure, interacts with SPPL2C (via active sites); the interaction stabilizes FREY1 protein and inhibits SPPL2C proteolytic activity. Interacts with IZUMO1; the interaction retains IZUMO1 at the endoplasmic reticulum membrane and coordinates IZUMO1 complex assembly.

It is found in the endoplasmic reticulum membrane. Functionally, key regulator for male fertility expressed transiently in round spermatids where it recruits IZUMO1 at the endoplasmic reticulum (ER) membrane and coordinates the oolemmal binding multimeric complex (IZUMO1 complex) assembly. Upon complete assembly of the IZUMO1 complex, its ER retention is released, facilitating IZUMO1 complex export to the acrosome. Through the interaction with SPPL2C, inhibits its intramembrane protease activity directly accessing the catalytic center of an I-CLiP. The polypeptide is Protein Frey (FREY1) (Bos taurus (Bovine)).